We begin with the raw amino-acid sequence, 310 residues long: B3 domain-containing transcription factor NGA1 (310 aa).

The disordered stretch occupies residues 1–26 (MMTDLSLTRDEDEEEAKPLAEEEGAR). Basic and acidic residues predominate over residues 16-26 (AKPLAEEEGAR). A DNA-binding region (TF-B3) is located at residues 35-141 (FDKVVTPSDV…RLFIDWRRRP (107 aa)). Positions 251 to 268 (ESGMTNSTEEESSSSGGS) are enriched in low complexity. A disordered region spans residues 251 to 310 (ESGMTNSTEEESSSSGGSLPRGGGGGASSSSFFQLRLGSSSEDDHFTKKGKSSLSFDLDQ).

As to quaternary structure, interacts with BRX. Interacts with BZIP30.

The protein resides in the nucleus. Functionally, regulates lateral organ growth. Functionally redundant with NGA2, NGA3 and NGA4. The chain is B3 domain-containing transcription factor NGA1 (NGA1) from Arabidopsis thaliana (Mouse-ear cress).